The primary structure comprises 394 residues: Elongation factor Tu (394 aa).

Residues 10-204 (KAHVNIGTIG…SVDSYIPTPT (195 aa)) form the tr-type G domain. The tract at residues 19–26 (GHIDHGKT) is G1. 19-26 (GHIDHGKT) contributes to the GTP binding site. Residue threonine 26 coordinates Mg(2+). A G2 region spans residues 60–64 (GITIN). The interval 81–84 (DCPG) is G3. GTP is bound by residues 81–85 (DCPGH) and 136–139 (NKCD). A G4 region spans residues 136–139 (NKCD). The G5 stretch occupies residues 174–176 (SAL).

The protein belongs to the TRAFAC class translation factor GTPase superfamily. Classic translation factor GTPase family. EF-Tu/EF-1A subfamily. Monomer.

It is found in the cytoplasm. The catalysed reaction is GTP + H2O = GDP + phosphate + H(+). GTP hydrolase that promotes the GTP-dependent binding of aminoacyl-tRNA to the A-site of ribosomes during protein biosynthesis. The chain is Elongation factor Tu from Malacoplasma penetrans (strain HF-2) (Mycoplasma penetrans).